The chain runs to 196 residues: Kunitz trypsin inhibitor 5 (196 aa).

An N-terminal signal peptide occupies residues 1–19 (MSSLLYIFLLLAVFISHRG). A disulfide bridge connects residues Cys156 and Cys167.

The protein belongs to the protease inhibitor I3 (leguminous Kunitz-type inhibitor) family.

The protein resides in the endoplasmic reticulum. In terms of biological role, can inhibit both serine proteases and cysteine proteases. May be involved in the modulation of the proteases that participate in the hydrolysis of dietary proteins in the gut of spider mites. In Arabidopsis thaliana (Mouse-ear cress), this protein is Kunitz trypsin inhibitor 5.